Reading from the N-terminus, the 514-residue chain is DNA-(apurinic or apyrimidinic site) endonuclease 2 (514 aa).

The Mg(2+) site is built by asparagine 8 and glutamate 48. Residue tyrosine 156 is part of the active site. Positions 197, 199, 303, and 304 each coordinate Mg(2+). Aspartate 197 functions as the Proton donor/acceptor in the catalytic mechanism. Residue histidine 304 is the Proton acceptor of the active site. Residues 359–417 (PSNQTQVHMRKNKARVRSTRSRPSKTGSSRGQKNLMSYFQPSSSGPQTSNLDLPSLGTL) form a disordered region. Positions 366-381 (HMRKNKARVRSTRSRP) are enriched in basic residues. A Glycyl lysine isopeptide (Lys-Gly) (interchain with G-Cter in ubiquitin) cross-link involves residue lysine 371. Residues 382-410 (SKTGSSRGQKNLMSYFQPSSSGPQTSNLD) are compositionally biased toward polar residues. The required for the interaction and colocalization with PCNA in nuclear foci in presence of oxidative-induced DNA damaging agents stretch occupies residues 390 to 397 (QKNLMSYF). The Zn(2+) site is built by cysteine 465, histidine 468, cysteine 491, and cysteine 505. A GRF-type zinc finger spans residues 465-514 (CGGHREPCVMRTVKKPGPNLGRHFYMCARPQGPPTDPSSRCNFFLWSRPS).

It belongs to the DNA repair enzymes AP/ExoA family. In terms of assembly, interacts with PCNA; this interaction is triggered by reactive oxygen species and increased by misincorporation of uracil in nuclear DNA. The cofactor is Mg(2+). Requires Mn(2+) as cofactor. Post-translationally, ubiquitinated by the CUL9-RBX1 complex. Ubiquitinated by MKRN3 at Lys-371 leading to proteasomal degradation.

The protein localises to the nucleus. It localises to the cytoplasm. The protein resides in the mitochondrion. The enzyme catalyses Exonucleolytic cleavage in the 3'- to 5'-direction to yield nucleoside 5'-phosphates.. 3'-5' exonuclease activity is activated by sodium and manganese. 3'-5' exonuclease and 3'-phosphodiesterase activities are stimulated in presence of PCNA. In terms of biological role, functions as a weak apurinic/apyrimidinic (AP) endodeoxyribonuclease in the DNA base excision repair (BER) pathway of DNA lesions induced by oxidative and alkylating agents. Initiates repair of AP sites in DNA by catalyzing hydrolytic incision of the phosphodiester backbone immediately adjacent to the damage, generating a single-strand break with 5'-deoxyribose phosphate and 3'-hydroxyl ends. Also displays double-stranded DNA 3'-5' exonuclease, 3'-phosphodiesterase activities. Shows robust 3'-5' exonuclease activity on 3'-recessed heteroduplex DNA and is able to remove mismatched nucleotides preferentially. Shows fairly strong 3'-phosphodiesterase activity involved in the removal of 3'-damaged termini formed in DNA by oxidative agents. In the nucleus functions in the PCNA-dependent BER pathway. Plays a role in reversing blocked 3' DNA ends, problematic lesions that preclude DNA synthesis. Required for somatic hypermutation (SHM) and DNA cleavage step of class switch recombination (CSR) of immunoglobulin genes. Required for proper cell cycle progression during proliferation of peripheral lymphocytes. This chain is DNA-(apurinic or apyrimidinic site) endonuclease 2 (APEX2), found in Bos taurus (Bovine).